The sequence spans 349 residues: Protein BCCIP homolog (349 aa).

The segment covering 1–10 has biased composition (basic residues); it reads MGRVFKKKGG. Residues 1–65 are disordered; the sequence is MGRVFKKKGG…DDEEEDEDEQ (65 aa). Residues 11 to 33 are compositionally biased toward basic and acidic residues; the sequence is AKREAEEEKQEELVMRKKLRKEE. Acidic residues predominate over residues 34 to 65; sequence EPEPVEDVEEDEDVSDEDDEDIDDEEEDEDEQ.

This sequence belongs to the BCP1 family.

This Caenorhabditis elegans protein is Protein BCCIP homolog.